The following is a 141-amino-acid chain: Endoribonuclease YbeY (141 aa).

Zn(2+) contacts are provided by histidine 100, histidine 104, and histidine 110.

It belongs to the endoribonuclease YbeY family. The cofactor is Zn(2+).

The protein localises to the cytoplasm. Functionally, single strand-specific metallo-endoribonuclease involved in late-stage 70S ribosome quality control and in maturation of the 3' terminus of the 16S rRNA. In Helicobacter pylori (strain J99 / ATCC 700824) (Campylobacter pylori J99), this protein is Endoribonuclease YbeY.